Here is a 137-residue protein sequence, read N- to C-terminus: Protein LTO1 homolog (137 aa).

A2 is subject to N-acetylalanine. The deca-GX3 motif; required for interaction with YAE1 and the CIA complex stretch occupies residues G22–G58.

The protein belongs to the LTO1 family. In terms of assembly, forms a complex with YAE1. Interacts with PYCR1 and PYCR2.

It localises to the nucleus. The complex LTO1:YAE1 functions as a target specific adapter that probably recruits apo-ABCE1 to the cytosolic iron-sulfur protein assembly (CIA) complex machinery. May be required for biogenesis of the large ribosomal subunit and initiation of translation. May play a role in the regulation of proline metabolism and ROS production. This is Protein LTO1 homolog from Mus musculus (Mouse).